The primary structure comprises 260 residues: Zinc import ATP-binding protein ZnuC (260 aa).

The 216-residue stretch at 14–229 folds into the ABC transporter domain; the sequence is LTARNLCADR…PEFARLFGDQ (216 aa). Residue 46–53 coordinates ATP; sequence GPNGAGKS.

The protein belongs to the ABC transporter superfamily. Zinc importer (TC 3.A.1.15.5) family. As to quaternary structure, the complex is composed of two ATP-binding proteins (ZnuC), two transmembrane proteins (ZnuB) and a solute-binding protein (ZnuA).

The protein resides in the cell inner membrane. It catalyses the reaction Zn(2+)(out) + ATP(in) + H2O(in) = Zn(2+)(in) + ADP(in) + phosphate(in) + H(+)(in). Functionally, part of the ABC transporter complex ZnuABC involved in zinc import. Responsible for energy coupling to the transport system. In Magnetococcus marinus (strain ATCC BAA-1437 / JCM 17883 / MC-1), this protein is Zinc import ATP-binding protein ZnuC.